The sequence spans 740 residues: Ion-translocating oxidoreductase complex subunit C (740 aa).

4Fe-4S ferredoxin-type domains follow at residues 369–397 (GEPQEEQSCIRCSACADACPADLLPQQLY) and 407–436 (KATTHNIADCIECGACAWVCPSNIPLVQYF). 8 residues coordinate [4Fe-4S] cluster: Cys-377, Cys-380, Cys-383, Cys-387, Cys-416, Cys-419, Cys-422, and Cys-426. The segment at 602–716 (KLEQQQANAE…EPEEQVDPRK (115 aa)) is disordered.

This sequence belongs to the 4Fe4S bacterial-type ferredoxin family. RnfC subfamily. In terms of assembly, the complex is composed of six subunits: RsxA, RsxB, RsxC, RsxD, RsxE and RsxG. The cofactor is [4Fe-4S] cluster.

It is found in the cell inner membrane. In terms of biological role, part of a membrane-bound complex that couples electron transfer with translocation of ions across the membrane. Required to maintain the reduced state of SoxR. The chain is Ion-translocating oxidoreductase complex subunit C from Escherichia coli (strain SE11).